The primary structure comprises 119 residues: Large ribosomal subunit protein uL18 (119 aa).

It belongs to the universal ribosomal protein uL18 family. In terms of assembly, part of the 50S ribosomal subunit; part of the 5S rRNA/L5/L18/L25 subcomplex. Contacts the 5S and 23S rRNAs.

Functionally, this is one of the proteins that bind and probably mediate the attachment of the 5S RNA into the large ribosomal subunit, where it forms part of the central protuberance. The protein is Large ribosomal subunit protein uL18 of Xanthomonas axonopodis pv. citri (strain 306).